The sequence spans 135 residues: Aspartate 1-decarboxylase (135 aa).

Catalysis depends on S25, which acts as the Schiff-base intermediate with substrate; via pyruvic acid. S25 is modified (pyruvic acid (Ser)). Position 57 (T57) interacts with substrate. Residue Y58 is the Proton donor of the active site. 73–75 (GAA) lines the substrate pocket.

It belongs to the PanD family. Heterooctamer of four alpha and four beta subunits. Pyruvate serves as cofactor. Post-translationally, is synthesized initially as an inactive proenzyme, which is activated by self-cleavage at a specific serine bond to produce a beta-subunit with a hydroxyl group at its C-terminus and an alpha-subunit with a pyruvoyl group at its N-terminus.

The protein resides in the cytoplasm. The catalysed reaction is L-aspartate + H(+) = beta-alanine + CO2. The protein operates within cofactor biosynthesis; (R)-pantothenate biosynthesis; beta-alanine from L-aspartate: step 1/1. Catalyzes the pyruvoyl-dependent decarboxylation of aspartate to produce beta-alanine. The protein is Aspartate 1-decarboxylase of Mycolicibacterium vanbaalenii (strain DSM 7251 / JCM 13017 / BCRC 16820 / KCTC 9966 / NRRL B-24157 / PYR-1) (Mycobacterium vanbaalenii).